Reading from the N-terminus, the 621-residue chain is Alpha-actinin-like protein 1 (621 aa).

Calponin-homology (CH) domains follow at residues 8–114 and 123–230; these read SVQN…LRFT and LTAK…HAFS. The interval 86-110 is actin-binding; it reads LTNIGPADIVDGNLKLILGLIWTLI. 3 EF-hand domains span residues 388-419, 487-549, and 550-618; these read LSTI…LGPL, DGIT…EIVM, and EELE…AEDK.

It belongs to the alpha-actinin family.

The protein resides in the cytoplasm. The protein localises to the cytoskeleton. Its function is as follows. Binds to actin and is involved in actin-ring formation and organization. Plays a role in cytokinesis and is involved in septation. The polypeptide is Alpha-actinin-like protein 1 (ain1) (Schizosaccharomyces pombe (strain 972 / ATCC 24843) (Fission yeast)).